A 151-amino-acid polypeptide reads, in one-letter code: 3-hydroxyacyl-[acyl-carrier-protein] dehydratase FabZ (151 aa).

His-56 is a catalytic residue.

It belongs to the thioester dehydratase family. FabZ subfamily.

It localises to the cytoplasm. It carries out the reaction a (3R)-hydroxyacyl-[ACP] = a (2E)-enoyl-[ACP] + H2O. In terms of biological role, involved in unsaturated fatty acids biosynthesis. Catalyzes the dehydration of short chain beta-hydroxyacyl-ACPs and long chain saturated and unsaturated beta-hydroxyacyl-ACPs. The protein is 3-hydroxyacyl-[acyl-carrier-protein] dehydratase FabZ of Rhodopseudomonas palustris (strain HaA2).